The chain runs to 557 residues: T-complex protein 1 subunit theta-like 2 (557 aa).

2 disordered regions span residues 1–33 (MDST…EPHL) and 531–557 (EIWN…GLNN).

This sequence belongs to the TCP-1 chaperonin family.

Its subcellular location is the cytoplasm. In terms of biological role, possible molecular chaperone; assists the folding of proteins upon ATP hydrolysis. The sequence is that of T-complex protein 1 subunit theta-like 2 (CCT8L2) from Homo sapiens (Human).